The chain runs to 208 residues: ATP synthase subunit b (208 aa).

Positions 1 to 18 are enriched in polar residues; sequence MFVSTAFAQTATESQPAS. Residues 1 to 26 are disordered; sequence MFVSTAFAQTATESQPASTAGEHGAA. Residues 56 to 78 traverse the membrane as a helical segment; that stretch reads SQVLWLAITFGLFYLFLSRVVLP.

It belongs to the ATPase B chain family. As to quaternary structure, F-type ATPases have 2 components, F(1) - the catalytic core - and F(0) - the membrane proton channel. F(1) has five subunits: alpha(3), beta(3), gamma(1), delta(1), epsilon(1). F(0) has three main subunits: a(1), b(2) and c(10-14). The alpha and beta chains form an alternating ring which encloses part of the gamma chain. F(1) is attached to F(0) by a central stalk formed by the gamma and epsilon chains, while a peripheral stalk is formed by the delta and b chains.

It localises to the cell inner membrane. In terms of biological role, f(1)F(0) ATP synthase produces ATP from ADP in the presence of a proton or sodium gradient. F-type ATPases consist of two structural domains, F(1) containing the extramembraneous catalytic core and F(0) containing the membrane proton channel, linked together by a central stalk and a peripheral stalk. During catalysis, ATP synthesis in the catalytic domain of F(1) is coupled via a rotary mechanism of the central stalk subunits to proton translocation. Component of the F(0) channel, it forms part of the peripheral stalk, linking F(1) to F(0). This is ATP synthase subunit b from Brucella melitensis biotype 1 (strain ATCC 23456 / CCUG 17765 / NCTC 10094 / 16M).